Reading from the N-terminus, the 306-residue chain is GTP cyclohydrolase FolE2 (306 aa).

The protein belongs to the GTP cyclohydrolase IV family.

The enzyme catalyses GTP + H2O = 7,8-dihydroneopterin 3'-triphosphate + formate + H(+). The protein operates within cofactor biosynthesis; 7,8-dihydroneopterin triphosphate biosynthesis; 7,8-dihydroneopterin triphosphate from GTP: step 1/1. In terms of biological role, converts GTP to 7,8-dihydroneopterin triphosphate. This Xanthomonas oryzae pv. oryzae (strain MAFF 311018) protein is GTP cyclohydrolase FolE2.